The chain runs to 235 residues: Transmembrane emp24 domain-containing protein 9 (235 aa).

Positions 1–37 are cleaved as a signal peptide; that stretch reads MAAERSLWVVGLCPGSRLGRVVRVLLLLLWFAARGGA. At 38–201 the chain is on the lumenal side; the sequence is LYFHIGETEK…FRQTSESTNQ (164 aa). In terms of domain architecture, GOLD spans 47-145; the sequence is KKCFIEEIPD…MLRVHLDIQV (99 aa). The required for interaction with STX17 stretch occupies residues 121-160; sequence CLHSNSTKFSLFAGGMLRVHLDIQVGEHANDYAEIAAKDK. N-linked (GlcNAc...) asparagine glycosylation occurs at N125. Positions 154–184 form a coiled coil; it reads EIAAKDKLSELQLRVRQLVEQVEQIQKEQNY. K160 bears the N6-acetyllysine mark. The helical transmembrane segment at 202–222 threads the bilayer; the sequence is RVLWWSILQTLILVAIGVWQM. The Cytoplasmic portion of the chain corresponds to 223 to 235; it reads RHLKSFFEAKKLV. The COPII vesicle coat-binding signature appears at 228-229; sequence FF. Residues 228 to 235 carry the COPI vesicle coat-binding motif; it reads FFEAKKLV.

Belongs to the EMP24/GP25L family. Monomer and homodimer in endoplasmic reticulum. Predominantly monomeric and to lesser extent homodimeric in endoplasmic reticulum-Golgi intermediate compartment and cis-Golgi network. Probably oligomerizes with other members of the EMP24/GP25L family such as TMED2, TMED7 and TMED10. Interacts with TMED5. Interacts (via C-terminus) with COPG1; the interaction involves dimeric TMED9. Interacts with PTPN2 and SPAST. Interacts with STX17; the interaction is direct. N-linked glycosylated containing high mannose.

It is found in the endoplasmic reticulum membrane. The protein resides in the golgi apparatus. It localises to the cis-Golgi network membrane. The protein localises to the endoplasmic reticulum-Golgi intermediate compartment membrane. Its subcellular location is the trans-Golgi network membrane. Its function is as follows. Appears to be involved in vesicular protein trafficking, mainly in the early secretory pathway. In COPI vesicle-mediated retrograde transport involved in the coatomer recruitment to membranes of the early secretory pathway. Increases coatomer-dependent activity of ARFGAP2. Thought to play a crucial role in the specific retention of p24 complexes in cis-Golgi membranes; specifically contributes to the coupled localization of TMED2 and TMED10 in the cis-Golgi network. May be involved in organization of intracellular membranes, such as of the ER-Golgi intermediate compartment and the Golgi apparatus. Involved in ER localization of PTPN2. This Bos taurus (Bovine) protein is Transmembrane emp24 domain-containing protein 9 (TMED9).